The primary structure comprises 107 residues: Metallothionein-1 (107 aa).

A propeptide spanning residues 1-2 is cleaved from the precursor; sequence MD.

This sequence belongs to the metallothionein superfamily. Type 7 family.

The metallothioneins are involved in the cellular sequestration of toxic metal ions. Binds 12 cadmium ions per molecule. The chain is Metallothionein-1 from Tetrahymena pyriformis.